A 522-amino-acid chain; its full sequence is F-box only protein 7 (522 aa).

The segment at M1 to P87 is ubiquitin-like. The segment covering S88–V132 has biased composition (polar residues). The segment at S88–P151 is disordered. An important for interaction with PINK1 region spans residues V91–T128. Positions T128–M168 are important for interaction with CDK6. Residues P179 to L323 form an important for dimerization and interaction with PSMF1 region. An F-box domain is found at V328 to L374. The interval R380–M522 is important for interaction with CDK6. An omega-N-methylarginine mark is found at R431 and R451. Positions R481–P484 match the RFDP motif motif. The interval P484 to M522 is disordered. R518 is subject to Asymmetric dimethylarginine.

In terms of assembly, part of the SCF (SKP1-CUL1-F-box) E3 ubiquitin-protein ligase complex SCF(FBXO7) formed of CUL1, SKP1, RBX1 and FBXO7. Interacts via its C-terminal proline-rich region with DLGAP5. Interacts with BIRC2. Interacts with CDK6 and promotes its interaction with D-type cyclin. Interacts (via the N-terminal Ubl domain) with PRKN. Interacts (via N-terminal region) with PINK1. Interacts with PSMF1.

It localises to the cytoplasm. It is found in the nucleus. Its subcellular location is the mitochondrion. The protein localises to the cytosol. It functions in the pathway protein modification; protein ubiquitination. Substrate recognition component of a SCF (SKP1-CUL1-F-box protein) E3 ubiquitin-protein ligase complex which mediates the ubiquitination and subsequent proteasomal degradation of target proteins and plays a role in several biological processes such as cell cycle, cell proliferation, or maintenance of chromosome stability. Recognizes and ubiquitinates BIRC2 and the cell cycle regulator DLGAP5. Plays a role downstream of PINK1 in the clearance of damaged mitochondria via selective autophagy (mitophagy) by targeting PRKN to dysfunctional depolarized mitochondria. Promotes MFN1 ubiquitination. Mediates the ubiquitination and proteasomal degradation of UXT isoform 2, thereby impairing the NF-kappa-B signaling pathway. Inhibits NF-kappa-B pathway also by promoting the ubiquitinatioin of TRAF2. Affects the assembly state and activity of the proteasome in the cells including neurons by ubiquitinating the proteasomal subunit PSMA2 via 'Lys-63'-linked polyubiquitin chains. Promotes 'Lys-48'-linked polyubiquitination SIRT7, leading to the hydrogen peroxide-induced cell death. The sequence is that of F-box only protein 7 (FBXO7) from Bos taurus (Bovine).